The following is a 524-amino-acid chain: Vang-like protein 1 (524 aa).

Residues 1–15 (MDTESTYSGYSYYSS) are compositionally biased toward low complexity. The segment at 1–85 (MDTESTYSGY…TTAITGTSEH (85 aa)) is disordered. The Cytoplasmic segment spans residues 1-117 (MDTESTYSGY…KRYLGLTVAS (117 aa)). The span at 73 to 85 (GETTTAITGTSEH) shows a compositional bias: polar residues. Serine 86 and serine 88 each carry phosphoserine. Residues 118–138 (FLGLLVFLTPIAFILLPPILW) form a helical membrane-spanning segment. Topologically, residues 139-151 (RDELEPCGTICEG) are extracellular. Residues 152–172 (LFISMAFKLLILLIGTWALFF) traverse the membrane as a helical segment. Topologically, residues 173–182 (RKRRADMPRV) are cytoplasmic. A helical membrane pass occupies residues 183–203 (FVFRALLLVLIFLFVVSYWLF). The Extracellular segment spans residues 204 to 222 (YGVRILDSRDRNYQGIVQY). A helical membrane pass occupies residues 223–243 (AVSLVDALLFIHYLAIVLLEL). Topologically, residues 244–524 (RQLQPMFTLQ…VLRLQSETSV (281 aa)) are cytoplasmic.

Belongs to the Vang family. In terms of assembly, heterodimer with VANGL2. Interacts through its C-terminal region with the N-terminal half of DVL1, DVL2 and DVL3. The PDZ domain of DVL1, DVL2 and DVL3 is required for the interaction. According to PubMed:11956595, ubiquitously expressed. According to PubMed:12011995, expressed specifically in testis and ovary.

It is found in the cell membrane. The protein is Vang-like protein 1 (VANGL1) of Homo sapiens (Human).